The sequence spans 1837 residues: Zinc finger SWIM domain-containing protein 8 (1837 aa).

Phosphoserine is present on residues S36, S48, and S53. The segment at 45 to 65 (RKQSAGPNSPTGGGGGGGSGG) is disordered. Residues 55–65 (TGGGGGGGSGG) are compositionally biased toward gly residues. The SWIM-type zinc-finger motif lies at 172–208 (YNVAVMFDRCRVTSCSCTCGAGAKWCTHVVALCLFRI). The residue at position 437 (S437) is a Phosphoserine. 3 disordered regions span residues 514-727 (SRPG…EEDD), 803-823 (NPPD…KVST), and 1016-1232 (SQTH…VPNQ). Basic and acidic residues-rich tracts occupy residues 523–532 (GLEESRDRPR) and 566–575 (LSAEGGDKAL). The residue at position 567 (S567) is a Phosphoserine. A compositionally biased stretch (gly residues) spans 579–602 (GPGGGKAKALGGAGSGSKGSAGGG). The span at 1019 to 1040 (HKPQTLSSFYSSSRPTTASQRS) shows a compositional bias: polar residues. Over residues 1119–1130 (SRGGYNGRGWGS) the composition is skewed to gly residues. A Phosphothreonine modification is found at T1139. A compositionally biased stretch (polar residues) spans 1144–1159 (IDSSAPETTSDSSPTL). S1153, S1156, and S1160 each carry phosphoserine. Residues 1174–1209 (GRGQDSDSISSSSSDSLGSSSSSGSRRASASGGARA) are compositionally biased toward low complexity. Residues 1210–1226 (KTVEVGRYKGRRPESHA) show a composition bias toward basic and acidic residues. S1267 is subject to Phosphoserine. 2 disordered regions span residues 1442 to 1464 (SASG…GGPG) and 1635 to 1656 (QPSP…SQPV). Residues 1447-1464 (RAGGEAGRGMPEGRGGPG) are compositionally biased toward gly residues. The residue at position 1836 (S1836) is a Phosphoserine.

The protein belongs to the ZSWIM8 family. Component of the SCF-like E3 ubiquitin-protein ligase complex which contains CUL3, RBX1, ELOB, ELOC and ZSWIM8. As to quaternary structure, (Microbial infection) Interacts with Zika virus protein NS5; this interaction allows STAT2 binding and subsequent proteasomal degradation.

Its subcellular location is the cytoplasm. The protein localises to the cytosol. It functions in the pathway protein modification; protein ubiquitination. Functionally, substrate recognition component of a SCF-like E3 ubiquitin-protein ligase complex that promotes target-directed microRNA degradation (TDMD), a process that mediates degradation of microRNAs (miRNAs). The SCF-like E3 ubiquitin-protein ligase complex acts by catalyzing ubiquitination and subsequent degradation of AGO proteins (AGO1, AGO2, AGO3 and/or AGO4), thereby exposing miRNAs for degradation. Specifically recognizes and binds AGO proteins when they are engaged with a TDMD target. May also act as a regulator of axon guidance: specifically recognizes misfolded ROBO3 and promotes its ubiquitination and subsequent degradation. Plays an essential role for proper embryonic development of heart and lung. Controls protein quality of DAB1, a key signal molecule for brain development, thus protecting its signaling strength. Mechanistically, recognizes intrinsically disordered regions of DAB1 and eliminates misfolded DAB1 that cannot be properly phosphorylated. (Microbial infection) Participates in Zika virus inhibition of IFN signaling by acting as a scaffold protein to connect ZSWIM8/CUL3 ligase complex and STAT2, leading to STAT2 degradation. This Homo sapiens (Human) protein is Zinc finger SWIM domain-containing protein 8.